Reading from the N-terminus, the 452-residue chain is Na(+)/H(+) antiporter NhaA (452 aa).

The next 11 membrane-spanning stretches (helical) occupy residues 27-47 (FSGI…NSAL), 67-87 (FIGM…FFLM), 108-128 (AFPA…YTLF), 137-157 (GFGI…LLLG), 166-186 (VFLV…IAIF), 194-214 (LWLL…KMGV), 216-236 (SLFP…NCGI), 314-334 (PWSA…VAIS), 343-363 (GVLP…ILGL), 381-401 (WIDI…SIFI), and 414-434 (VAKI…YFFI).

This sequence belongs to the NhaA Na(+)/H(+) (TC 2.A.33) antiporter family.

Its subcellular location is the cell inner membrane. The enzyme catalyses Na(+)(in) + 2 H(+)(out) = Na(+)(out) + 2 H(+)(in). In terms of biological role, na(+)/H(+) antiporter that extrudes sodium in exchange for external protons. The chain is Na(+)/H(+) antiporter NhaA from Wolinella succinogenes (strain ATCC 29543 / DSM 1740 / CCUG 13145 / JCM 31913 / LMG 7466 / NCTC 11488 / FDC 602W) (Vibrio succinogenes).